The sequence spans 225 residues: Cytidylate kinase (225 aa).

Position 11 to 19 (11 to 19 (GPSGAGKGT)) interacts with ATP.

The protein belongs to the cytidylate kinase family. Type 1 subfamily.

The protein resides in the cytoplasm. The catalysed reaction is CMP + ATP = CDP + ADP. It catalyses the reaction dCMP + ATP = dCDP + ADP. In Mannheimia succiniciproducens (strain KCTC 0769BP / MBEL55E), this protein is Cytidylate kinase.